We begin with the raw amino-acid sequence, 433 residues long: Oxaloacetate decarboxylase beta chain 2 (433 aa).

The next 10 helical transmembrane spans lie at 16 to 36, 42 to 62, 122 to 142, 168 to 188, 190 to 210, 216 to 236, 266 to 286, 311 to 331, 340 to 360, and 413 to 433; these read LGAG…LAIA, LLLL…AGMA, VLAL…VIFM, FGIF…LIAF, LPQA…AIYL, PELL…VPLI, ILFP…AAPL, NGLI…KLVA, LGIL…GVLM, and VAGV…VLAM.

Belongs to the GcdB/MmdB/OadB family. Heterotrimer of an alpha, a beta and a gamma subunit. Na(+) is required as a cofactor.

The protein localises to the cell membrane. The catalysed reaction is oxaloacetate + 2 Na(+)(in) + H(+) = pyruvate + 2 Na(+)(out) + CO2. In terms of biological role, catalyzes the decarboxylation of oxaloacetate coupled to Na(+) translocation. In Salmonella typhi, this protein is Oxaloacetate decarboxylase beta chain 2 (oadB2).